The sequence spans 112 residues: MALQSTLGAVWLGLLLNSLWKVAESKDQVFQPSTVASSEGAVVEIFCNHSVSNAYNFFWYLHFPGCAPRLLVKGSKPSQQGRYNMTYERFSSSLLILQVREADAAVYYCAVE.

The signal sequence occupies residues 1–25; that stretch reads MALQSTLGAVWLGLLLNSLWKVAES. Residues 26-112 enclose the Ig-like domain; it reads KDQVFQPSTV…DAAVYYCAVE (87 aa). Cysteine 47 and cysteine 109 are oxidised to a cystine. Asparagine 48 and asparagine 84 each carry an N-linked (GlcNAc...) asparagine glycan.

As to quaternary structure, alpha-beta TR is a heterodimer composed of an alpha and beta chain; disulfide-linked. The alpha-beta TR is associated with the transmembrane signaling CD3 coreceptor proteins to form the TR-CD3 (TcR or TCR). The assembly of alpha-beta TR heterodimers with CD3 occurs in the endoplasmic reticulum where a single alpha-beta TR heterodimer associates with one CD3D-CD3E heterodimer, one CD3G-CD3E heterodimer and one CD247 homodimer forming a stable octameric structure. CD3D-CD3E and CD3G-CD3E heterodimers preferentially associate with TR alpha and TR beta chains, respectively. The association of the CD247 homodimer is the last step of TcR assembly in the endoplasmic reticulum and is required for transport to the cell surface.

It localises to the cell membrane. Its function is as follows. V region of the variable domain of T cell receptor (TR) alpha chain that participates in the antigen recognition. Alpha-beta T cell receptors are antigen specific receptors which are essential to the immune response and are present on the cell surface of T lymphocytes. Recognize peptide-major histocompatibility (MH) (pMH) complexes that are displayed by antigen presenting cells (APC), a prerequisite for efficient T cell adaptive immunity against pathogens. Binding of alpha-beta TR to pMH complex initiates TR-CD3 clustering on the cell surface and intracellular activation of LCK that phosphorylates the ITAM motifs of CD3G, CD3D, CD3E and CD247 enabling the recruitment of ZAP70. In turn ZAP70 phosphorylates LAT, which recruits numerous signaling molecules to form the LAT signalosome. The LAT signalosome propagates signal branching to three major signaling pathways, the calcium, the mitogen-activated protein kinase (MAPK) kinase and the nuclear factor NF-kappa-B (NF-kB) pathways, leading to the mobilization of transcription factors that are critical for gene expression and essential for T cell growth and differentiation. The T cell repertoire is generated in the thymus, by V-(D)-J rearrangement. This repertoire is then shaped by intrathymic selection events to generate a peripheral T cell pool of self-MH restricted, non-autoaggressive T cells. Post-thymic interaction of alpha-beta TR with the pMH complexes shapes TR structural and functional avidity. The protein is T cell receptor alpha variable 2 of Homo sapiens (Human).